Here is a 1840-residue protein sequence, read N- to C-terminus: Sodium channel protein type 4 subunit alpha (1840 aa).

Over 1–131 (MASSSLPNLV…RVAIKVLIHA (131 aa)) the chain is Cytoplasmic. Residues 36 to 60 (EARLQRNKQMEIEEPERKPRSDLEA) show a composition bias toward basic and acidic residues. The disordered stretch occupies residues 36–63 (EARLQRNKQMEIEEPERKPRSDLEAGKN). An I repeat occupies 113 to 448 (LLSPFSIVRR…VVAMAYAEQN (336 aa)). The helical transmembrane segment at 132–150 (LFSMFIMITILTNCVFMTM) threads the bilayer. Topologically, residues 151 to 157 (SNPPSWS) are extracellular. Residues 158-178 (KHVEYTFTGIYTFESLIKMLA) traverse the membrane as a helical segment. Topologically, residues 179-192 (RGFCIDDFTFLRDP) are cytoplasmic. A helical transmembrane segment spans residues 193–210 (WNWLDFSVITMAYVTEFV). Topologically, residues 211-216 (DLGNIS) are extracellular. A helical transmembrane segment spans residues 217 to 233 (ALRTFRVLRALKTITVI). Residues 234–252 (PGLKTIVGALIQSVKKLSD) lie on the Cytoplasmic side of the membrane. A helical membrane pass occupies residues 253–272 (VMILTVFCLSVFALVGLQLF). The Extracellular segment spans residues 273-385 (MGNLRQKCVR…PNYGYTSYDT (113 aa)). Residues Cys280 and Cys354 are joined by a disulfide bond. Asn288, Asn291, Asn297, Asn303, Asn309, Asn315, Asn327, and Asn356 each carry an N-linked (GlcNAc...) asparagine glycan. An intrachain disulfide couples Cys363 to Cys369. An intramembrane region (pore-forming) is located at residues 386 to 410 (FSWAFLALFRLMTQDYWENLFQLTL). Residues 411 to 417 (RAAGKTY) lie on the Extracellular side of the membrane. A helical membrane pass occupies residues 418–438 (MIFFVVIIFLGSFYLINLILA). Residues 439-572 (VVAMAYAEQN…HIIYLIVMDP (134 aa)) are Cytoplasmic-facing. Residues 481-522 (AAQALESGEEADGDPTHNKDCNGSLDASGEKGPPRPSCSADS) form a disordered region. Ser487 is subject to Phosphoserine. Residues 554 to 826 (CCAPWVKFKH…QIAIGRIKWG (273 aa)) form an II repeat. The helical transmembrane segment at 573 to 591 (FVDLGITICIVLNTLFMAM) threads the bilayer. The Extracellular segment spans residues 592 to 602 (EHYPMTEHFDN). The chain crosses the membrane as a helical span at residues 603 to 622 (VLSVGNLVFTGIFTAEMVLK). Residues 623 to 636 (LIAMDPYEYFQQGW) lie on the Cytoplasmic side of the membrane. The helical transmembrane segment at 637 to 656 (NIFDSFIVTLSLVELGLANV) threads the bilayer. Topologically, residues 657-658 (QG) are extracellular. A helical transmembrane segment spans residues 659–676 (LSVLRSFRLLRVFKLAKS). At 677–692 (WPTLNMLIKIIGNSVG) the chain is on the cytoplasmic side. The chain crosses the membrane as a helical span at residues 693–711 (ALGNLTLVLAIIVFIFAVV). The Extracellular segment spans residues 712–740 (GMQLFGKSYKECVCKIASDCNLPRWHMND). Cys725 and Cys731 are oxidised to a cystine. An intramembrane region (pore-forming) is located at residues 741–761 (FFHSFLIVFRILCGEWIETMW). Topologically, residues 762 to 772 (DCMEVAGQAMC) are extracellular. Cys763 and Cys772 are joined by a disulfide. Residues 773–791 (LTVFLMVMVIGNLVVLNLF) traverse the membrane as a helical segment. Residues 792–1025 (LALLLSSFSA…ACFKIVEHNW (234 aa)) are Cytoplasmic-facing. 2 disordered regions span residues 854–884 (EPGG…LKDN) and 925–983 (DLEM…GEQP). Residues 868 to 884 (EDEKKEPPPEDKELKDN) show a composition bias toward basic and acidic residues. 2 stretches are compositionally biased toward acidic residues: residues 925–940 (DLEM…FSEP) and 968–983 (EDPE…GEQP). Residues 1006–1319 (RGKMWWTLRR…KKYYNAMKKL (314 aa)) form an III repeat. The helical transmembrane segment at 1026–1043 (FETFIVFMILLSSGALAF) threads the bilayer. Over 1044 to 1056 (EDIYIEQRRVIRT) the chain is Extracellular. A helical membrane pass occupies residues 1057-1075 (ILEYADKVFTYIFILEMLL). The Cytoplasmic portion of the chain corresponds to 1076–1089 (KWVAYGFKVYFTNA). The chain crosses the membrane as a helical span at residues 1090–1108 (WCWLDFLIVDVSIISLVAN). Residues 1109-1116 (WLGYSELG) are Extracellular-facing. The chain crosses the membrane as a helical span at residues 1117–1135 (PIKSLRTLRALRPLRALSR). The Cytoplasmic portion of the chain corresponds to 1136–1152 (FEGMRVVVNALLGAIPS). The chain crosses the membrane as a helical span at residues 1153-1172 (IMNVLLVCLIFWLIFSIMGV). Residues 1173 to 1223 (NLFAGKFYYCVNTTTSERFDISVVNNKSESESLMYTGQVRWMNVKVNYDNV) are Extracellular-facing. The N-linked (GlcNAc...) asparagine glycan is linked to Asn1198. The segment at residues 1224–1245 (GLGYLSLLQVATFKGWMDIMYA) is an intramembrane region (pore-forming). The Extracellular segment spans residues 1246–1262 (AVDSREKEEQPHYEVNL). A helical membrane pass occupies residues 1263-1284 (YMYLYFVIFIIFGSFFTLNLFI). The Cytoplasmic segment spans residues 1285-1347 (GVIIDNFNQQ…MVYDFVTKQV (63 aa)). The tract at residues 1303 to 1305 (IFM) is important for rapid channel inactivation. The IV repeat unit spans residues 1328–1626 (IPRPQNKIQG…WEKFDPDATQ (299 aa)). Residues 1348-1365 (FDISIMILICLNMVTMMV) traverse the membrane as a helical segment. Topologically, residues 1366–1376 (ETDDQSQLKVD) are extracellular. The chain crosses the membrane as a helical span at residues 1377–1395 (ILYNINMVFIIIFTGECVL). At 1396 to 1407 (KMFALRHYYFTI) the chain is on the cytoplasmic side. The helical transmembrane segment at 1408-1425 (GWNIFDFVVVILSIVGLA) threads the bilayer. Residues 1426–1438 (LSDLIQKYFVSPT) lie on the Extracellular side of the membrane. The helical transmembrane segment at 1439-1455 (LFRVIRLARIGRVLRLI) threads the bilayer. Over 1456-1474 (RGAKGIRTLLFALMMSLPA) the chain is Cytoplasmic. The helical transmembrane segment at 1475–1492 (LFNIGLLLFLVMFIYSIF) threads the bilayer. Topologically, residues 1493–1514 (GMSNFAYVKKESGIDDMFNFET) are extracellular. The segment at residues 1515–1537 (FGNSIICLFEITTSAGWDGLLNP) is an intramembrane region (pore-forming). At 1538–1567 (ILNSGPPDCDPTLENPGTNVRGDCGNPSIG) the chain is on the extracellular side. A disulfide bridge connects residues Cys1546 and Cys1561. A helical transmembrane segment spans residues 1568–1590 (ICFFCSYIIISFLIVVNMYIAII). Residues 1591-1840 (LENFNVATEE…VRPGVKESLV (250 aa)) lie on the Cytoplasmic side of the membrane. The 30-residue stretch at 1720-1749 (EEVCAIKIQRAYRRHLLQRSVKQASYMYRH) folds into the IQ domain. The interval 1775–1840 (HEKEGDGVQS…VRPGVKESLV (66 aa)) is disordered. Residues 1804–1813 (PTSSSDTALT) are compositionally biased toward low complexity. A compositionally biased stretch (pro residues) spans 1814–1824 (PSPPPLPPSSS).

It belongs to the sodium channel (TC 1.A.1.10) family. Nav1.4/SCN4A subfamily. The Nav1.4 voltage-gated sodium channel consists of an ion-conducting alpha subunit SCN4A which is functional on its own and a regulatory beta subunit SCN1B. SCN1B strongly enhances the presence of SCN4A at the cell surface. SCN1B is also required for rapid channel inactivation and recovery after inactivation. It prevents the decrease of channel activity in response to repetitive, high-frequency depolarizations. Interacts with the syntrophins SNTA1, SNTB1 and SNTB2 (via PDZ domain); probably links SCN4A to the actin cytoskeleton and the extracellular matrix via the dystrophin-associated protein complex and regulates its localization in muscle cells. Interacts with TMEM233; probable regulator of the channel. As to expression, detected in skeletal muscle.

Its subcellular location is the cell membrane. It carries out the reaction Na(+)(in) = Na(+)(out). With respect to regulation, potently inhibited by tetrodotoxin and saxitoxin. Inhibited by the conotoxin GVIIJ. Pore-forming subunit of Nav1.4, a voltage-gated sodium (Nav) channel that directly mediates the depolarizing phase of action potentials in excitable membranes. Navs, also called VGSCs (voltage-gated sodium channels) or VDSCs (voltage-dependent sodium channels), operate by switching between closed and open conformations depending on the voltage difference across the membrane. In the open conformation they allow Na(+) ions to selectively pass through the pore, along their electrochemical gradient. The influx of Na+ ions provokes membrane depolarization, initiating the propagation of electrical signals throughout cells and tissues. Highly expressed in skeletal muscles, Nav1.4 generates the action potential crucial for muscle contraction. The chain is Sodium channel protein type 4 subunit alpha from Rattus norvegicus (Rat).